We begin with the raw amino-acid sequence, 89 residues long: Putative regulatory protein MAE_11840 (89 aa).

Belongs to the RemA family.

This Microcystis aeruginosa (strain NIES-843 / IAM M-2473) protein is Putative regulatory protein MAE_11840.